Reading from the N-terminus, the 433-residue chain is Ribosome biogenesis protein WDR12 homolog (433 aa).

Residue Met-1 is modified to N-acetylmethionine. Residues 12-96 form a ubiquitin-like (UBL) domain region; sequence LHVKFVTKLD…ERTLEIEYIR (85 aa). 7 WD repeats span residues 108 to 146, 148 to 191, 203 to 242, 270 to 308, 310 to 350, 356 to 396, and 399 to 433; these read LHDD…SHIL, GHSG…SVDS, GHKA…SEGE, GHTQ…DSLN, FCGK…TSAP, SHSS…PLSV, and THND…IAIS. The disordered stretch occupies residues 238-263; it reads TSEGESVSVKKRKGNNQAEESQSEGE.

This sequence belongs to the WD repeat WDR12/YTM1 family. Interacts with PES. Interacts with BOP1.

Its subcellular location is the nucleus. It localises to the nucleolus. The protein localises to the nucleoplasm. Functionally, required for maturation of ribosomal RNAs and formation of the large ribosomal subunit. The polypeptide is Ribosome biogenesis protein WDR12 homolog (Arabidopsis thaliana (Mouse-ear cress)).